Here is a 159-residue protein sequence, read N- to C-terminus: Protein C2 (159 aa).

Positions 43 to 60 (KKRPPKLTWAPKKKRRKA) match the Nuclear localization signal motif. The segment at 65 to 81 (CGCSYYGGIDCEDGFTH) is a zinc-finger region. The segment at 102–139 (PNLLPPPEHNNNGDGEQNNNITNQSQPQPAESVGSPDL) is disordered. A compositionally biased stretch (low complexity) spans 110-124 (HNNNGDGEQNNNITN).

Belongs to the geminiviridae transcriptional activator protein family. As to quaternary structure, monomer. Suppress local silencing by interacting with and inactivating host adenosine kinase 2 (ADK2) in the cytoplasm. Interacts with and inhibits host SNF1 kinase.

It is found in the host cytoplasm. Functionally, acts as a suppressor of RNA-mediated gene silencing, also known as post-transcriptional gene silencing (PTGS), a mechanism of plant viral defense that limits the accumulation of viral RNAs. Suppresses the host RNA silencing by inhibiting adenosine kinase 2 (ADK2), a kinase involved in a general methylation pathway. Also suppresses the host basal defense by interacting with and inhibiting SNF1 kinase, a key regulator of cell metabolism implicated in innate antiviral defense. Determines pathogenicity. The polypeptide is Protein C2 (Tomato pseudo-curly top virus (TPCTV)).